The sequence spans 541 residues: Membrane protein insertase YidC (541 aa).

6 helical membrane-spanning segments follow: residues 7-27 (FLIV…GVTH), 289-309 (YLLT…VTLP), 356-376 (IIHS…LAFY), 430-450 (LPIL…LEMV), 463-483 (LSAQ…MFAQ), and 498-518 (IMMA…SGLV).

It belongs to the OXA1/ALB3/YidC family. Type 1 subfamily. Interacts with the Sec translocase complex via SecD. Specifically interacts with transmembrane segments of nascent integral membrane proteins during membrane integration.

It localises to the cell inner membrane. Required for the insertion and/or proper folding and/or complex formation of integral membrane proteins into the membrane. Involved in integration of membrane proteins that insert both dependently and independently of the Sec translocase complex, as well as at least some lipoproteins. Aids folding of multispanning membrane proteins. This Ruthia magnifica subsp. Calyptogena magnifica protein is Membrane protein insertase YidC.